The sequence spans 100 residues: MKGATLTRADLCEAVHEEVGLTRQDCAGLVERTLDLVAEALEQGETVKLSGFGVFQVRAKRARMGRNPKTGEPAEIEPRRVIGFRASQVMKARIDRALGG.

The protein belongs to the bacterial histone-like protein family. Heterodimer of an alpha and a beta chain.

In terms of biological role, this protein is one of the two subunits of integration host factor, a specific DNA-binding protein that functions in genetic recombination as well as in transcriptional and translational control. In Caulobacter vibrioides (strain ATCC 19089 / CIP 103742 / CB 15) (Caulobacter crescentus), this protein is Integration host factor subunit alpha.